The chain runs to 276 residues: Octanoyltransferase LipM (276 aa).

The region spanning 31–246 (GKVPPTVRFY…GFASGLEVEL (216 aa)) is the BPL/LPL catalytic domain. Cys-148 acts as the Acyl-thioester intermediate in catalysis.

Belongs to the octanoyltransferase LipM family. In terms of assembly, monomer.

It carries out the reaction octanoyl-[ACP] + L-lysyl-[protein] = N(6)-octanoyl-L-lysyl-[protein] + holo-[ACP] + H(+). The protein operates within protein modification; protein lipoylation via endogenous pathway; protein N(6)-(lipoyl)lysine from octanoyl-[acyl-carrier-protein]. In terms of biological role, catalyzes the transfer of endogenously produced octanoic acid from octanoyl-acyl-carrier-protein onto the lipoyl domain of GcvH, an intermediate carrier during protein lipoylation. The protein is Octanoyltransferase LipM of Brevibacillus brevis (strain 47 / JCM 6285 / NBRC 100599).